We begin with the raw amino-acid sequence, 157 residues long: EKWELDLDIKEVLMHPNYSRSTSDNDIALLRLAQPAILSQTIVPICLPDSGLAERELTQAGQETVVTGWGHRSEAKRNRTFVLNFIKVPVVPQNECINAMHNMISENMLCAGILGDSQDACEGDSGGPMVASFRGTSFLVGLVTWGEGCGRLHNYGV.

The 157-residue stretch at 1 to 157 (EKWELDLDIK…GCGRLHNYGV (157 aa)) folds into the Peptidase S1 domain. Asparagine 17 carries an N-linked (GlcNAc...) asparagine glycan. Aspartate 26 functions as the Charge relay system in the catalytic mechanism. An N-linked (GlcNAc...) asparagine glycan is attached at asparagine 78. 2 cysteine pairs are disulfide-bonded: cysteine 96–cysteine 110 and cysteine 121–cysteine 149. The active-site Charge relay system is the serine 125.

Belongs to the peptidase S1 family. In terms of tissue distribution, plasma; synthesized in the liver.

It localises to the secreted. Its subcellular location is the golgi apparatus. The protein localises to the endoplasmic reticulum. It carries out the reaction Degradation of blood coagulation factors Va and VIIIa.. Functionally, protein C is a vitamin K-dependent serine protease that regulates blood coagulation by inactivating factors Va and VIIIa in the presence of calcium ions and phospholipids. Exerts a protective effect on the endothelial cell barrier function. The protein is Vitamin K-dependent protein C (PROC) of Felis catus (Cat).